A 234-amino-acid polypeptide reads, in one-letter code: Transcriptional regulatory protein CitB (234 aa).

In terms of domain architecture, Response regulatory spans 5 to 121; it reads TTLIVEDEPM…RLQHTLERFA (117 aa). Asp56 carries the 4-aspartylphosphate modification. Residues 181 to 200 constitute a DNA-binding region (H-T-H motif); sequence ADSLARILGSSKTTARRYLE.

In terms of assembly, in vitro CitB and the CitA kinase domain form a complex, formation of which is enhanced by ATP. In terms of processing, phosphorylated by CitA.

The protein resides in the cytoplasm. Its function is as follows. Member of the two-component regulatory system CitA/CitB essential for expression of citrate-specific fermentation genes. Phosphorylated CitB binds to two sites in the citS-citC intergenic region where it probably activates transcription of both genes. The protein is Transcriptional regulatory protein CitB (citB) of Klebsiella pneumoniae.